A 436-amino-acid chain; its full sequence is Trigger factor (436 aa).

The region spanning 163–248 (TDRVIIDFAG…VKNVAEAILP (86 aa)) is the PPIase FKBP-type domain.

This sequence belongs to the FKBP-type PPIase family. Tig subfamily.

The protein localises to the cytoplasm. The enzyme catalyses [protein]-peptidylproline (omega=180) = [protein]-peptidylproline (omega=0). Involved in protein export. Acts as a chaperone by maintaining the newly synthesized protein in an open conformation. Functions as a peptidyl-prolyl cis-trans isomerase. The polypeptide is Trigger factor (Laribacter hongkongensis (strain HLHK9)).